The sequence spans 182 residues: MSRSKKSRKPGTNSNDQLVVVRTRSESELESRLRKKLKKRKGLKSGSRHSEGSESQVRQAAQKRDPRLGSKKPIPLIVAEPKKLNKQERKLAAEQELAMLEKDAQLNVLLDRLDNGEKLGIGLQKYVDEKLDRIEVLMEQLGLLDDEPEPAPAPQSKPTKKRKTEDDLLSEFEQLDVDKYQD.

Disordered stretches follow at residues 1–79 (MSRS…LIVA) and 143–182 (LLDDEPEPAPAPQSKPTKKRKTEDDLLSEFEQLDVDKYQD). Positions 23–32 (TRSESELESR) are enriched in basic and acidic residues. Over residues 33–47 (LRKKLKKRKGLKSGS) the composition is skewed to basic residues.

The protein belongs to the YihI family. As to quaternary structure, interacts with Der.

A GTPase-activating protein (GAP) that modifies Der/EngA GTPase function. May play a role in ribosome biogenesis. The protein is Der GTPase-activating protein YihI of Vibrio cholerae serotype O1 (strain ATCC 39541 / Classical Ogawa 395 / O395).